The chain runs to 308 residues: Glycine--tRNA ligase alpha subunit (308 aa).

The protein belongs to the class-II aminoacyl-tRNA synthetase family. In terms of assembly, tetramer of two alpha and two beta subunits.

It is found in the cytoplasm. The catalysed reaction is tRNA(Gly) + glycine + ATP = glycyl-tRNA(Gly) + AMP + diphosphate. The chain is Glycine--tRNA ligase alpha subunit from Brucella canis (strain ATCC 23365 / NCTC 10854 / RM-666).